Here is a 221-residue protein sequence, read N- to C-terminus: Uracil-DNA glycosylase 1 (221 aa).

Catalysis depends on Asp61, which acts as the Proton acceptor.

Belongs to the uracil-DNA glycosylase (UDG) superfamily. UNG family.

Its subcellular location is the cytoplasm. The enzyme catalyses Hydrolyzes single-stranded DNA or mismatched double-stranded DNA and polynucleotides, releasing free uracil.. Its function is as follows. Excises uracil residues from the DNA which can arise as a result of misincorporation of dUMP residues by DNA polymerase or due to deamination of cytosine. This Listeria monocytogenes serovar 1/2a (strain ATCC BAA-679 / EGD-e) protein is Uracil-DNA glycosylase 1.